Here is a 984-residue protein sequence, read N- to C-terminus: Detocs histidine-protein kinase DtcA (984 aa).

At H645 the chain carries Phosphohistidine; by autocatalysis.

Post-translationally, autophosphorylated.

The catalysed reaction is ATP + protein L-histidine = ADP + protein N-phospho-L-histidine.. Functionally, sensor-kinase member of the two-component regulatory system Detocs that confers resistance to bacteriophage. When the system (DtcA-DtcB-DtcC) is expressed in a susceptible E.coli (strain MG1655) it confers resistance to bacteriophages T2, T4, T5, T6 and SECphi27. Detocs inhibits T5 infection leading to growth arrest but not complete cell lysis, during SECphi27 infection leads to cell lysis. DtcA (this subunit) probably autophosphorylates upon sensing viral infection, and subsequently transfers the phosphate signal to DtcC which activates it, leading to an antiviral defense; DtcB may scavenge phosphorylation signals from accidental activation of DtcA. This is Detocs histidine-protein kinase DtcA from Vibrio alginolyticus.